The following is a 163-amino-acid chain: Type-2 ice-structuring protein (163 aa).

A signal peptide spans 1 to 17; the sequence is MLTVSLLVCAMMALTQA. Residues 18–34 constitute a propeptide that is removed on maturation; that stretch reads NDDKILKGTATEAGPVS. The region spanning 39–163 is the C-type lectin domain; it reads PNCPAGWQPL…SHKSVCAMTF (125 aa). 5 cysteine pairs are disulfide-bonded: cysteine 41–cysteine 52, cysteine 69–cysteine 159, cysteine 103–cysteine 134, cysteine 123–cysteine 145, and cysteine 135–cysteine 151.

The N-terminus is blocked.

It is found in the secreted. Antifreeze proteins lower the blood freezing point. The protein is Type-2 ice-structuring protein of Hemitripterus americanus (Sea raven).